The following is a 356-amino-acid chain: Protein MGF 360-3L (356 aa).

The stretch at 61 to 93 is one ANK repeat; the sequence is KLNTALVLAVKENNEDLIMLFTEWGANINYGLL.

The protein belongs to the asfivirus MGF 360 family.

In terms of biological role, plays a role in virus cell tropism, and may be required for efficient virus replication in macrophages. The sequence is that of Protein MGF 360-3L from African swine fever virus (isolate Warthog/Namibia/Wart80/1980) (ASFV).